Consider the following 333-residue polypeptide: 4-hydroxy-2-oxovalerate aldolase (333 aa).

The Pyruvate carboxyltransferase domain maps to 3 to 253 (ILINDSTLRD…NTGIDLYHFL (251 aa)). 11–12 (RD) contributes to the substrate binding site. Position 12 (aspartate 12) interacts with Mn(2+). The active-site Proton acceptor is histidine 15. 2 residues coordinate substrate: serine 165 and histidine 192. The Mn(2+) site is built by histidine 192 and histidine 194.

Belongs to the 4-hydroxy-2-oxovalerate aldolase family. In terms of assembly, interacts with MhpF.

The enzyme catalyses (S)-4-hydroxy-2-oxopentanoate = acetaldehyde + pyruvate. The protein operates within aromatic compound metabolism; 3-phenylpropanoate degradation. Catalyzes the retro-aldol cleavage of 4-hydroxy-2-oxopentanoate to pyruvate and acetaldehyde. Is involved in the meta-cleavage pathway for the degradation of aromatic compounds. The protein is 4-hydroxy-2-oxovalerate aldolase of Serratia proteamaculans (strain 568).